Consider the following 182-residue polypeptide: Adenine phosphoribosyltransferase (182 aa).

The protein belongs to the purine/pyrimidine phosphoribosyltransferase family. Homodimer.

It is found in the cytoplasm. It carries out the reaction AMP + diphosphate = 5-phospho-alpha-D-ribose 1-diphosphate + adenine. It participates in purine metabolism; AMP biosynthesis via salvage pathway; AMP from adenine: step 1/1. Functionally, catalyzes a salvage reaction resulting in the formation of AMP, that is energically less costly than de novo synthesis. In Pseudomonas entomophila (strain L48), this protein is Adenine phosphoribosyltransferase.